Here is a 570-residue protein sequence, read N- to C-terminus: Molecular chaperone MKKS (570 aa).

192–199 (GHIILGKS) provides a ligand contact to ATP. The substrate-binding apical domain stretch occupies residues 198–370 (KSLIVPLKGQ…FHLIPNEATI (173 aa)).

The protein belongs to the TCP-1 chaperonin family. Component of a complex composed at least of MKKS, BBS10, BBS12, TCP1, CCT2, CCT3, CCT4, CCT5 and CCT8. Interacts with STUB1. Interacts with BBS2 (via coiled coil domain). Interacts with CCDC28B. Interacts with BBS12. Interacts with SMARCC1, a component of the SWI/SNF complexes; the interaction takes place predominantly in the cytoplasm and may modulate SMARCC1 location. Interacts with DLEC1. Widely expressed in adult and fetal tissues.

The protein localises to the cytoplasm. The protein resides in the cytoskeleton. It localises to the microtubule organizing center. Its subcellular location is the centrosome. It is found in the cytosol. The protein localises to the nucleus. Its function is as follows. Probable molecular chaperone that assists the folding of proteins upon ATP hydrolysis. Plays a role in the assembly of BBSome, a complex involved in ciliogenesis regulating transports vesicles to the cilia. May play a role in protein processing in limb, cardiac and reproductive system development. May play a role in cytokinesis. The sequence is that of Molecular chaperone MKKS from Homo sapiens (Human).